The chain runs to 359 residues: Probable dual-specificity RNA methyltransferase RlmN (359 aa).

The active-site Proton acceptor is the Glu-91. Residues 97–329 (QHYGHSVCVT…KKNGVNCVVR (233 aa)) enclose the Radical SAM core domain. Cysteines 104 and 340 form a disulfide. Positions 111, 115, and 118 each coordinate [4Fe-4S] cluster. S-adenosyl-L-methionine-binding positions include 163 to 164 (GE), Ser-195, 218 to 220 (SLH), and Asn-296. Residue Cys-340 is the S-methylcysteine intermediate of the active site.

Belongs to the radical SAM superfamily. RlmN family. Requires [4Fe-4S] cluster as cofactor.

It is found in the cytoplasm. The enzyme catalyses adenosine(2503) in 23S rRNA + 2 reduced [2Fe-2S]-[ferredoxin] + 2 S-adenosyl-L-methionine = 2-methyladenosine(2503) in 23S rRNA + 5'-deoxyadenosine + L-methionine + 2 oxidized [2Fe-2S]-[ferredoxin] + S-adenosyl-L-homocysteine. The catalysed reaction is adenosine(37) in tRNA + 2 reduced [2Fe-2S]-[ferredoxin] + 2 S-adenosyl-L-methionine = 2-methyladenosine(37) in tRNA + 5'-deoxyadenosine + L-methionine + 2 oxidized [2Fe-2S]-[ferredoxin] + S-adenosyl-L-homocysteine. In terms of biological role, specifically methylates position 2 of adenine 2503 in 23S rRNA and position 2 of adenine 37 in tRNAs. The sequence is that of Probable dual-specificity RNA methyltransferase RlmN from Streptococcus pyogenes serotype M3 (strain ATCC BAA-595 / MGAS315).